The following is a 135-amino-acid chain: Ribosome-binding factor A (135 aa).

The protein belongs to the RbfA family. In terms of assembly, monomer. Binds 30S ribosomal subunits, but not 50S ribosomal subunits or 70S ribosomes.

The protein localises to the cytoplasm. In terms of biological role, one of several proteins that assist in the late maturation steps of the functional core of the 30S ribosomal subunit. Associates with free 30S ribosomal subunits (but not with 30S subunits that are part of 70S ribosomes or polysomes). Required for efficient processing of 16S rRNA. May interact with the 5'-terminal helix region of 16S rRNA. The chain is Ribosome-binding factor A from Novosphingobium aromaticivorans (strain ATCC 700278 / DSM 12444 / CCUG 56034 / CIP 105152 / NBRC 16084 / F199).